Consider the following 295-residue polypeptide: Phosphoribosylaminoimidazole-succinocarboxamide synthase (295 aa).

Belongs to the SAICAR synthetase family.

It catalyses the reaction 5-amino-1-(5-phospho-D-ribosyl)imidazole-4-carboxylate + L-aspartate + ATP = (2S)-2-[5-amino-1-(5-phospho-beta-D-ribosyl)imidazole-4-carboxamido]succinate + ADP + phosphate + 2 H(+). It functions in the pathway purine metabolism; IMP biosynthesis via de novo pathway; 5-amino-1-(5-phospho-D-ribosyl)imidazole-4-carboxamide from 5-amino-1-(5-phospho-D-ribosyl)imidazole-4-carboxylate: step 1/2. The sequence is that of Phosphoribosylaminoimidazole-succinocarboxamide synthase from Corynebacterium ammoniagenes (Brevibacterium ammoniagenes).